The following is a 202-amino-acid chain: Imidazoleglycerol-phosphate dehydratase (202 aa).

The protein belongs to the imidazoleglycerol-phosphate dehydratase family.

The protein resides in the cytoplasm. It carries out the reaction D-erythro-1-(imidazol-4-yl)glycerol 3-phosphate = 3-(imidazol-4-yl)-2-oxopropyl phosphate + H2O. It participates in amino-acid biosynthesis; L-histidine biosynthesis; L-histidine from 5-phospho-alpha-D-ribose 1-diphosphate: step 6/9. The protein is Imidazoleglycerol-phosphate dehydratase of Synechococcus sp. (strain CC9605).